The sequence spans 381 residues: Succinyl-diaminopimelate desuccinylase (381 aa).

A Zn(2+)-binding site is contributed by His-68. Asp-70 is a catalytic residue. Zn(2+) is bound at residue Asp-101. Catalysis depends on Glu-135, which acts as the Proton acceptor. Zn(2+)-binding residues include Glu-136, Glu-164, and His-350.

Belongs to the peptidase M20A family. DapE subfamily. Homodimer. The cofactor is Zn(2+). Requires Co(2+) as cofactor.

The enzyme catalyses N-succinyl-(2S,6S)-2,6-diaminopimelate + H2O = (2S,6S)-2,6-diaminopimelate + succinate. The protein operates within amino-acid biosynthesis; L-lysine biosynthesis via DAP pathway; LL-2,6-diaminopimelate from (S)-tetrahydrodipicolinate (succinylase route): step 3/3. Its function is as follows. Catalyzes the hydrolysis of N-succinyl-L,L-diaminopimelic acid (SDAP), forming succinate and LL-2,6-diaminopimelate (DAP), an intermediate involved in the bacterial biosynthesis of lysine and meso-diaminopimelic acid, an essential component of bacterial cell walls. The protein is Succinyl-diaminopimelate desuccinylase of Neisseria meningitidis serogroup C / serotype 2a (strain ATCC 700532 / DSM 15464 / FAM18).